We begin with the raw amino-acid sequence, 1482 residues long: MQRSPLEKASIFSKLFFSWTRPILRKGYRQRLELSDIYHISSSDSADNLSEKLEREWDRELASKKNPKLINALRRCFFWRFMFYGIILYLGEVTKAVQPLLLGRIIASYDPDNKAERSIAIYLGVGLCLLFIVRTLLLHPAIFGPHHIGMQMRIAMFSLIYKKTLKLSSRVLDKISIGQLVSLLSNNLNKFDEGLALAHFVWIAPLQVTLLMGLLWELLQASAFCGLAFLVVLALFQAGLGKMMMKYRDQRAGKINERLVITSEMIENIQSVKAYCWEEAMEKMIENLRQTELKLTRKAAYVRYFNSSAFFFSGLFVVFLSVLPYALLKGIMLRKIFTTISFCIVLRMAVTRQFPWAVQTWYDSLGAINKIQDFLQKQEYKTLEYNLTTTEVVMENVTAFWEEGFGKLFEKAKQNNNSRKISNGDNSLFFSNFSLLGTPVLKDISFKIERGQLLAVAGSTGAGKTSLLMMIMGELEPSEGKIKHSGRISFCSQFSWIMPGTIKENIIFGVSYDEYRYRSVIKACQLEEDISKFAEKDNIVLGEGGITLSGGQRARISLARAVYKDADLYLLDSPFGYLDVLTEKEIFESCVCKLMANKTRILVTSKMEHLKKADKILILHEGSSYFYGTFSELQSQRPDFSSKLMGYDTFDQFTAERRNSIITETLRRFSLEGDASVSWNETKKQSFKQTGEFGEKRKNSILNSINSIRKFSIVQKTPLQMNGFEEDSGEPLERRLSLVPDSEHGEAILPRSNVINAGPTFQGRRRQSVLNLMTRSSVNQGQSIHRKTATSTRKMSLVPQANLTEIDIYSRRLSQDTGLEISEEINEEDLRECFFDDVESIPTVTTWNTYLRYVTVHKSLIFVLIWCLVVFLAEVAACLVVLCLLKKTSPQDKGNSTKGANNSYAVIITSTSAYYVFYIYVGVADGLLALGLFRGLPLVHTLITVSKILHRKMLHSVLQAPMSTLNTLKAGGILNRFSKDIAVLDDLLPLTIFDFIQLLLIVIGAVAVVSVLKPYIFLATVPVIVAFILLRAYFLHTSQQLKQLESEGRSPIFTHLITSLKGLWTLRAFGRQPYFETLFHKALNLHTANWFLYLSTLRWFQMRIEMIFVIFFIAVTFISILTTGEGEGTVGIILTLAMNIMSTLQWAVNSSIDVDSLMRSVSRVFKFIDMPAEGDQPNRSFKPSKDGQLSKVMIIENQHVKKDDIWPSGGQMTVKDLTAKYVDGGNAVLENISFSISPGQRVGLLGRTGSGKSTLLLAFLRLLNTEGEIQVDGVSWDSITLQQWRKAFGVIPQKVFIFSGTFRKNLDPYGQWNDQEIWKVAEEVGLRSVIEQFPGKLDFVLVDGGCVLSHGHKQLMCLARSVLGKAKILLLDEPSAHLDPITYQIIRRTLKQAFADCTVILSEHRIEAMLECQRFLVIEENKVRQYDSIQRLLSEKSLFRQAISPLDRLKLLPHRNSSKQRSRSKIAALKEETEEEVQETRL.

Topologically, residues 1-77 (MQRSPLEKAS…KLINALRRCF (77 aa)) are cytoplasmic. Residues 78-98 (FWRFMFYGIILYLGEVTKAVQ) form a helical membrane-spanning segment. Positions 81-365 (FMFYGIILYL…WAVQTWYDSL (285 aa)) constitute an ABC transmembrane type-1 1 domain. Over 99–122 (PLLLGRIIASYDPDNKAERSIAIY) the chain is Extracellular. Residues 123–146 (LGVGLCLLFIVRTLLLHPAIFGPH) form a helical membrane-spanning segment. Topologically, residues 147-195 (HIGMQMRIAMFSLIYKKTLKLSSRVLDKISIGQLVSLLSNNLNKFDEGL) are cytoplasmic. Residues 196–216 (ALAHFVWIAPLQVTLLMGLLW) form a helical membrane-spanning segment. At 217-222 (ELLQAS) the chain is on the extracellular side. Residues 223–243 (AFCGLAFLVVLALFQAGLGKM) form a helical membrane-spanning segment. Residues 244-298 (MMKYRDQRAGKINERLVITSEMIENIQSVKAYCWEEAMEKMIENLRQTELKLTRK) are Cytoplasmic-facing. Residues 299–319 (AAYVRYFNSSAFFFSGLFVVF) traverse the membrane as a helical segment. The Extracellular portion of the chain corresponds to 320–339 (LSVLPYALLKGIMLRKIFTT). A helical membrane pass occupies residues 340 to 358 (ISFCIVLRMAVTRQFPWAV). Over 359 to 859 (QTWYDSLGAI…YLRYVTVHKS (501 aa)) the chain is Cytoplasmic. Residues tryptophan 401, serine 434, 458–465 (GSTGAGKT), and glutamine 493 each bind ATP. An ABC transporter 1 domain is found at 423–646 (NGDNSLFFSN…RPDFSSKLMG (224 aa)). The S-palmitoyl cysteine moiety is linked to residue cysteine 524. Phosphoserine is present on residues serine 549 and serine 660. The segment at 654–832 (TAERRNSIIT…EEINEEDLRE (179 aa)) is disordered R region. A Phosphoserine; by PKA modification is found at serine 670. A Phosphoserine modification is found at serine 686. Residue lysine 688 forms a Glycyl lysine isopeptide (Lys-Gly) (interchain with G-Cter in ubiquitin) linkage. Phosphoserine is present on residues serine 700 and serine 712. A Phosphothreonine modification is found at threonine 717. Phosphoserine occurs at positions 737, 768, 791, 796, and 814. Residues 860–880 (LIFVLIWCLVVFLAEVAACLV) traverse the membrane as a helical segment. The ABC transmembrane type-1 2 domain maps to 860–1156 (LIFVLIWCLV…AVNSSIDVDS (297 aa)). The Extracellular portion of the chain corresponds to 881–919 (VLCLLKKTSPQDKGNSTKGANNSYAVIITSTSAYYVFYI). Residues asparagine 895 and asparagine 901 are each glycosylated (N-linked (GlcNAc...) asparagine). The discontinuously helical transmembrane segment at 920 to 940 (YVGVADGLLALGLFRGLPLVH) threads the bilayer. The Cytoplasmic portion of the chain corresponds to 941–991 (TLITVSKILHRKMLHSVLQAPMSTLNTLKAGGILNRFSKDIAVLDDLLPLT). A helical membrane pass occupies residues 992–1012 (IFDFIQLLLIVIGAVAVVSVL). Topologically, residues 1013–1014 (KP) are extracellular. The chain crosses the membrane as a helical span at residues 1015–1035 (YIFLATVPVIVAFILLRAYFL). Over 1036–1096 (HTSQQLKQLE…TANWFLYLST (61 aa)) the chain is Cytoplasmic. Residues 1097-1117 (LRWFQMRIEMIFVIFFIAVTF) traverse the membrane as a helical segment. The Extracellular segment spans residues 1118–1131 (ISILTTGEGEGTVG). The chain crosses the membrane as a helical span at residues 1132 to 1152 (IILTLAMNIMSTLQWAVNSSI). The Cytoplasmic segment spans residues 1153-1482 (DVDSLMRSVS…TEEEVQETRL (330 aa)). The ABC transporter 2 domain occupies 1212–1445 (MTVKDLTAKY…KSLFRQAISP (234 aa)). Residues tyrosine 1221 and 1246–1253 (GRTGSGKS) each bind ATP. The tract at residues 1388–1482 (RTLKQAFADC…TEEEVQETRL (95 aa)) is interaction with GORASP2. A lipid anchor (S-palmitoyl cysteine) is attached at cysteine 1397. Basic residues predominate over residues 1454–1464 (HRNSSKQRSRS). Residues 1454–1482 (HRNSSKQRSRSKIAALKEETEEEVQETRL) are disordered. Phosphoserine is present on serine 1458. The segment covering 1472-1482 (ETEEEVQETRL) has biased composition (acidic residues). A PDZ-binding motif is present at residues 1480-1482 (TRL).

Belongs to the ABC transporter superfamily. ABCC family. CFTR transporter (TC 3.A.1.202) subfamily. As to quaternary structure, monomer; does not require oligomerization for channel activity. May form oligomers in the membrane. Interacts with SLC26A3, SLC26A6 and NHERF1. Interacts with SHANK2. Interacts with MYO6. Interacts (via C-terminus) with GOPC (via PDZ domain); this promotes CFTR internalization and thereby decreases channel activity. Interacts with SLC4A7 through NHERF1. Found in a complex with MYO5B and RAB11A. Interacts with ANO1. Interacts with SLC26A8. Interacts with AHCYL1; the interaction increases CFTR activity. Interacts with CSE1L. The core-glycosylated form interacts with GORASP2 (via PDZ GRASP-type 1 domain) in respone to ER stress. Interacts with MARCHF2; the interaction leads to CFTR ubiqtuitination and degradation. Interacts with ADGRG2. In terms of processing, N-glycosylated. Post-translationally, phosphorylated; cAMP treatment promotes phosphorylation and activates the channel. Dephosphorylation decreases the ATPase activity (in vitro). Phosphorylation at PKA sites activates the channel. Phosphorylation at PKC sites enhances the response to phosphorylation by PKA. Phosphorylated by AMPK; this inhibits channel activity. Ubiquitinated, leading to its degradation in the lysosome. Deubiquitination by USP10 in early endosomes enhances its endocytic recycling to the cell membrane. Ubiquitinated by RNF185 during ER stress. Ubiquitinated by MARCHF2.

The protein localises to the apical cell membrane. It is found in the early endosome membrane. It localises to the cell membrane. Its subcellular location is the recycling endosome membrane. The protein resides in the endoplasmic reticulum membrane. The protein localises to the nucleus. It catalyses the reaction ATP + H2O + closed Cl(-) channel = ADP + phosphate + open Cl(-) channel.. The catalysed reaction is chloride(in) = chloride(out). The enzyme catalyses hydrogencarbonate(in) = hydrogencarbonate(out). It carries out the reaction ATP + H2O = ADP + phosphate + H(+). Epithelial ion channel that plays an important role in the regulation of epithelial ion and water transport and fluid homeostasis. Mediates the transport of chloride ions across the cell membrane. Possesses an intrinsic ATPase activity and utilizes ATP to gate its channel; the passive flow of anions through the channel is gated by cycles of ATP binding and hydrolysis by the ATP-binding domains. The ion channel is also permeable to HCO(3)(-); selectivity depends on the extracellular chloride concentration. Exerts its function also by modulating the activity of other ion channels and transporters. Contributes to the regulation of the pH and the ion content of the epithelial fluid layer. Modulates the activity of the epithelial sodium channel (ENaC) complex, in part by regulating the cell surface expression of the ENaC complex. May regulate bicarbonate secretion and salvage in epithelial cells by regulating the transporter SLC4A7. Can inhibit the chloride channel activity of ANO1. Plays a role in the chloride and bicarbonate homeostasis during sperm epididymal maturation and capacitation. The protein is Cystic fibrosis transmembrane conductance regulator of Sus scrofa (Pig).